Here is a 274-residue protein sequence, read N- to C-terminus: 3-methyl-2-oxobutanoate hydroxymethyltransferase (274 aa).

Mg(2+)-binding residues include Asp49 and Asp88. Residues 49–50, Asp88, and Lys118 each bind 3-methyl-2-oxobutanoate; that span reads DS. Glu120 is a Mg(2+) binding site. Residue Glu187 is the Proton acceptor of the active site.

This sequence belongs to the PanB family. In terms of assembly, homodecamer; pentamer of dimers. Mg(2+) is required as a cofactor.

The protein resides in the cytoplasm. The enzyme catalyses 3-methyl-2-oxobutanoate + (6R)-5,10-methylene-5,6,7,8-tetrahydrofolate + H2O = 2-dehydropantoate + (6S)-5,6,7,8-tetrahydrofolate. The protein operates within cofactor biosynthesis; (R)-pantothenate biosynthesis; (R)-pantoate from 3-methyl-2-oxobutanoate: step 1/2. In terms of biological role, catalyzes the reversible reaction in which hydroxymethyl group from 5,10-methylenetetrahydrofolate is transferred onto alpha-ketoisovalerate to form ketopantoate. This chain is 3-methyl-2-oxobutanoate hydroxymethyltransferase, found in Rhodopseudomonas palustris (strain HaA2).